Reading from the N-terminus, the 47-residue chain is uncharacterized protein (47 aa).

This is an uncharacterized protein from Escherichia coli.